Consider the following 364-residue polypeptide: tRNA-specific 2-thiouridylase MnmA (364 aa).

ATP-binding positions include 12-19 (GMSGGVDS) and Met-38. Positions 98 to 100 (NPD) are interaction with target base in tRNA. The active-site Nucleophile is Cys-103. A disulfide bond links Cys-103 and Cys-199. Gly-127 is a binding site for ATP. The interaction with tRNA stretch occupies residues 149–151 (KDQ). Cys-199 acts as the Cysteine persulfide intermediate in catalysis. The segment at 307-308 (RY) is interaction with tRNA.

The protein belongs to the MnmA/TRMU family.

It localises to the cytoplasm. It catalyses the reaction S-sulfanyl-L-cysteinyl-[protein] + uridine(34) in tRNA + AH2 + ATP = 2-thiouridine(34) in tRNA + L-cysteinyl-[protein] + A + AMP + diphosphate + H(+). Its function is as follows. Catalyzes the 2-thiolation of uridine at the wobble position (U34) of tRNA, leading to the formation of s(2)U34. The chain is tRNA-specific 2-thiouridylase MnmA from Shouchella clausii (strain KSM-K16) (Alkalihalobacillus clausii).